We begin with the raw amino-acid sequence, 316 residues long: Taste receptor type 2 member 109 (316 aa).

The Extracellular portion of the chain corresponds to 1 to 14 (MEHLLKRTFDITEN). A helical membrane pass occupies residues 15-35 (ILLIILFIELIIGLIGNGFTA). Over 36-62 (LVHCMDWVKRKKMSLVNKILTALATSR) the chain is Cytoplasmic. A helical transmembrane segment spans residues 63-83 (IFLLWFMLVGFPISSLYPYLV). Over 84–94 (TTRLMIQFTST) the chain is Extracellular. Residues 95–115 (LWTIANHISVWFATCLSVFYF) traverse the membrane as a helical segment. Topologically, residues 116–135 (LKIANFSNSPFLYLKRRVEK) are cytoplasmic. The helical transmembrane segment at 136 to 156 (VVSVTLLVSLVLLFLNILLLN) threads the bilayer. The Extracellular portion of the chain corresponds to 157 to 191 (LEINMCINEYHQINISYIFISYYHLSCQIQVLGSH). N-linked (GlcNAc...) asparagine glycosylation is present at N170. The helical transmembrane segment at 192 to 212 (IIFLSVPVVLSLSTFLLLIFS) threads the bilayer. Residues 213-241 (LWTLHKRMQQHVQGGRDARTTAHFKALQA) lie on the Cytoplasmic side of the membrane. Residues 242–262 (VIAFLLLYSIFILSLLLQFWI) traverse the membrane as a helical segment. Residues 263–270 (HGLRKKPP) lie on the Extracellular side of the membrane. Residues 271–291 (FIAFCQVVDTAFPSFHSYVLI) form a helical membrane-spanning segment. The Cytoplasmic portion of the chain corresponds to 292-316 (LRDRKLRHASLSVLSWLKCRPNYVK).

The protein belongs to the G-protein coupled receptor T2R family.

The protein localises to the membrane. Putative taste receptor which may play a role in the perception of bitterness. The sequence is that of Taste receptor type 2 member 109 from Mus musculus (Mouse).